The primary structure comprises 316 residues: Acetyl-coenzyme A carboxylase carboxyl transferase subunit alpha (316 aa).

One can recognise a CoA carboxyltransferase C-terminal domain in the interval 39 to 293 (RLQDKSKALT…RGELLAQLKM (255 aa)).

Belongs to the AccA family. In terms of assembly, acetyl-CoA carboxylase is a heterohexamer composed of biotin carboxyl carrier protein (AccB), biotin carboxylase (AccC) and two subunits each of ACCase subunit alpha (AccA) and ACCase subunit beta (AccD).

The protein resides in the cytoplasm. It carries out the reaction N(6)-carboxybiotinyl-L-lysyl-[protein] + acetyl-CoA = N(6)-biotinyl-L-lysyl-[protein] + malonyl-CoA. The protein operates within lipid metabolism; malonyl-CoA biosynthesis; malonyl-CoA from acetyl-CoA: step 1/1. Component of the acetyl coenzyme A carboxylase (ACC) complex. First, biotin carboxylase catalyzes the carboxylation of biotin on its carrier protein (BCCP) and then the CO(2) group is transferred by the carboxyltransferase to acetyl-CoA to form malonyl-CoA. The protein is Acetyl-coenzyme A carboxylase carboxyl transferase subunit alpha of Pseudomonas aeruginosa (strain UCBPP-PA14).